Reading from the N-terminus, the 154-residue chain is Crossover junction endodeoxyribonuclease RuvC (154 aa).

Residues D7, E66, and D139 contribute to the active site. D7, E66, and D139 together coordinate Mg(2+).

Belongs to the RuvC family. As to quaternary structure, homodimer which binds Holliday junction (HJ) DNA. The HJ becomes 2-fold symmetrical on binding to RuvC with unstacked arms; it has a different conformation from HJ DNA in complex with RuvA. In the full resolvosome a probable DNA-RuvA(4)-RuvB(12)-RuvC(2) complex forms which resolves the HJ. Mg(2+) serves as cofactor.

The protein resides in the cytoplasm. The catalysed reaction is Endonucleolytic cleavage at a junction such as a reciprocal single-stranded crossover between two homologous DNA duplexes (Holliday junction).. In terms of biological role, the RuvA-RuvB-RuvC complex processes Holliday junction (HJ) DNA during genetic recombination and DNA repair. Endonuclease that resolves HJ intermediates. Cleaves cruciform DNA by making single-stranded nicks across the HJ at symmetrical positions within the homologous arms, yielding a 5'-phosphate and a 3'-hydroxyl group; requires a central core of homology in the junction. The consensus cleavage sequence is 5'-(A/T)TT(C/G)-3'. Cleavage occurs on the 3'-side of the TT dinucleotide at the point of strand exchange. HJ branch migration catalyzed by RuvA-RuvB allows RuvC to scan DNA until it finds its consensus sequence, where it cleaves and resolves the cruciform DNA. The polypeptide is Crossover junction endodeoxyribonuclease RuvC (Aliarcobacter butzleri (strain RM4018) (Arcobacter butzleri)).